The sequence spans 238 residues: ATP synthase subunit O, mitochondrial (238 aa).

The N-terminal 36 residues, 1 to 36 (MANRFRSGISFFKTIAVTDSVSSVRSKSLFPALRTY), are a transit peptide targeting the mitochondrion. Thr-90 carries the phosphothreonine modification.

It belongs to the ATPase delta chain family. As to quaternary structure, F-type ATPases have 2 components, CF(1) - the catalytic core - and CF(0) - the membrane proton channel. CF(1) has five subunits: alpha(3), beta(3), gamma(1), delta(1), epsilon(1). CF(0) has three main subunits: a, b and c.

Its subcellular location is the mitochondrion. The protein resides in the mitochondrion inner membrane. Mitochondrial membrane ATP synthase (F(1)F(0) ATP synthase or Complex V) produces ATP from ADP in the presence of a proton gradient across the membrane which is generated by electron transport complexes of the respiratory chain. F-type ATPases consist of two structural domains, F(1) - containing the extramembraneous catalytic core and F(0) - containing the membrane proton channel, linked together by a central stalk and a peripheral stalk. During catalysis, ATP synthesis in the catalytic domain of F(1) is coupled via a rotary mechanism of the central stalk subunits to proton translocation. Part of the complex F(0) domain and the peripheric stalk, which acts as a stator to hold the catalytic alpha(3)beta(3) subcomplex and subunit a/ATP6 static relative to the rotary elements. The chain is ATP synthase subunit O, mitochondrial from Arabidopsis thaliana (Mouse-ear cress).